The sequence spans 568 residues: Urease subunit alpha (568 aa).

A Urease domain is found at 130–568 (GGIDTHIHFI…LPMAQRYFLF (439 aa)). Residues histidine 135, histidine 137, and lysine 218 each coordinate Ni(2+). Lysine 218 bears the N6-carboxylysine mark. Histidine 220 provides a ligand contact to substrate. Ni(2+)-binding residues include histidine 247 and histidine 273. Catalysis depends on histidine 321, which acts as the Proton donor. Residue aspartate 361 coordinates Ni(2+).

The protein belongs to the metallo-dependent hydrolases superfamily. Urease alpha subunit family. As to quaternary structure, heterotrimer of UreA (gamma), UreB (beta) and UreC (alpha) subunits. Three heterotrimers associate to form the active enzyme. It depends on Ni cation as a cofactor. Carboxylation allows a single lysine to coordinate two nickel ions.

Its subcellular location is the cytoplasm. The enzyme catalyses urea + 2 H2O + H(+) = hydrogencarbonate + 2 NH4(+). Its pathway is nitrogen metabolism; urea degradation; CO(2) and NH(3) from urea (urease route): step 1/1. The chain is Urease subunit alpha from Burkholderia vietnamiensis (strain G4 / LMG 22486) (Burkholderia cepacia (strain R1808)).